The following is a 226-amino-acid chain: 2-dehydro-3-deoxy-phosphogluconate aldolase (226 aa).

Catalysis depends on Glu-57, which acts as the Proton acceptor. Residues Arg-61, Thr-85, and Lys-145 each contribute to the pyruvate site. Lys-145 functions as the Schiff-base intermediate with substrate in the catalytic mechanism.

Belongs to the KHG/KDPG aldolase family. Homotrimer.

The enzyme catalyses 2-dehydro-3-deoxy-6-phospho-D-gluconate = D-glyceraldehyde 3-phosphate + pyruvate. Its pathway is carbohydrate acid metabolism; 2-dehydro-3-deoxy-D-gluconate degradation; D-glyceraldehyde 3-phosphate and pyruvate from 2-dehydro-3-deoxy-D-gluconate: step 2/2. In terms of biological role, involved in the degradation of glucose via the Entner-Doudoroff pathway. Catalyzes the reversible, stereospecific retro-aldol cleavage of 2-keto-3-deoxy-6-phosphogluconate (KDPG) to pyruvate and D-glyceraldehyde-3-phosphate. In Pseudomonas putida (Arthrobacter siderocapsulatus), this protein is 2-dehydro-3-deoxy-phosphogluconate aldolase.